The chain runs to 425 residues: Intermediate conductance calcium-activated potassium channel protein 4 (425 aa).

The helical transmembrane segment at 30 to 50 (LVLAGTGIGLMVLHAEMLWFL) threads the bilayer. A helical membrane pass occupies residues 59-79 (LLVKCLITLSTAFLLCLIVVF). A helical transmembrane segment spans residues 105–121 (VAQILLELLVCGVHPVP). Residues 141-161 (GFLGEGEALLSLAMLLRLYLV) form a helical membrane-spanning segment. A helical transmembrane segment spans residues 205-225 (LLLGLTLGLWLTTAWVLSVAE). Residues 239–259 (LWLIPITFLTIGYGDVVPGTL) constitute an intramembrane region (pore-forming). The chain crosses the membrane as a helical span at residues 263–283 (IVCLCTGVMGVCCTALLVAVV). Residues 284 to 345 (ARKLEFNKAE…RRHQRKMLAA (62 aa)) are calmodulin-binding. His356 carries the post-translational modification Phosphohistidine.

This sequence belongs to the potassium channel KCNN family. KCa3.1/KCNN4 subfamily. As to quaternary structure, homodimer. Homotetramer. Heterotetramer of potassium channel proteins. Interacts with MTMR6; this interaction leads to selective dephosphorylation of PI(3)P in a lipid microdomain adjacent to KCNN4, resulting in a decrease of intermediate conductance calcium-activated potassium channel activity. Interacts (via the C-tail domain) with CALM1; the calmodulin binding is constitutive, does not require calcium and mediates calcium-dependent gating and four calmodulin molecules bind to one channel tetramer. Phosphorylation at His-356 by NDKB activates the intermediate conductance calcium-activated potassium channel activity, and conversely it's dephosphorylation by PHPT1 inhibits this activity.

It localises to the cell membrane. Its subcellular location is the cell projection. The protein localises to the ruffle membrane. The catalysed reaction is K(+)(in) = K(+)(out). In terms of biological role, intermediate conductance calcium-activated potassium channel that mediates the voltage-independent transmembrane transfer of potassium across the cell membrane through a constitutive interaction with calmodulin which binds the intracellular calcium allowing its opening. The current is characterized by a voltage-independent activation, an intracellular calcium concentration increase-dependent activation and a single-channel conductance of about 25 picosiemens. Also presents an inwardly rectifying current, thus reducing its already small outward conductance of potassium ions, which is particularly the case when the membrane potential displays positive values, above + 20 mV. Controls calcium influx during vascular contractility by being responsible of membrane hyperpolarization induced by vasoactive factors in proliferative vascular smooth muscle cell types. Following calcium influx, the consecutive activation of KCNN4 channel leads to a hyperpolarization of the cell membrane potential and hence an increase of the electrical driving force for further calcium influx promoting sustained calcium entry in response to stimulation with chemotactic peptides. Required for maximal calcium influx and proliferation during the reactivation of naive T-cells. Plays a role in the late stages of EGF-induced macropinocytosis through activation by PI(3)P. This is Intermediate conductance calcium-activated potassium channel protein 4 from Rattus norvegicus (Rat).